A 627-amino-acid polypeptide reads, in one-letter code: MDIEDELPARTDRKKALVEKLGTLPPSPGVYQFRNSSGRVIYVGKAKNLRNRVRSYFRNQQQLYGKTLVLVTHIADFEVIITSSEVEALILENNMIKELKPRYNVNLKDDKTYPYLVITNEPFPRILISRQRRKDGSTWFGPYTESRQLHSILDLIGSIFPVRSCKFRLSEENIATKKYKVCLDYHIHKCKGPCEGRQSEEEYLLMIAEITRLLKGKTSTMIRSLTSAMQLFARELKFERAAEIKMQLESLKRYAERQKVVAGDGLDRDVFAVATGEEDGCGVVFKIREGKLLGSQRIYMNNVTGETDSGLQARVMEKYYLETLELLPDEILLQESLGADEEETLRALFSEKEREEAQEKKNIRFLVPQIGEKAHLVEMCRQNARHHLEEYLIQKQKRGEAAREHYGLTALKELLHLPKLPQRIECFDNSHLQGTDYVSSMICFEKGKPKKADYRKFKINSFEGSDDYAAMEEVIRRRYSGSLSSKLPWPDLIVVDGGKGQVNIAFQTLNALGLSIPIIGLAKRIEEIFTPQARDPFNLPKTSPALKLLQQMRDEAHRFAITYHRKLRSERMLQTELTTIAGIGEKTAFKLLERFGSVDAVAQATLEELTAAAGAKTATAIYRFYRP.

The GIY-YIG domain maps to 26 to 105; the sequence is PSPGVYQFRN…IKELKPRYNV (80 aa). The UVR domain maps to 219 to 254; that stretch reads STMIRSLTSAMQLFARELKFERAAEIKMQLESLKRY.

The protein belongs to the UvrC family. As to quaternary structure, interacts with UvrB in an incision complex.

It localises to the cytoplasm. The UvrABC repair system catalyzes the recognition and processing of DNA lesions. UvrC both incises the 5' and 3' sides of the lesion. The N-terminal half is responsible for the 3' incision and the C-terminal half is responsible for the 5' incision. This chain is UvrABC system protein C, found in Pelodictyon phaeoclathratiforme (strain DSM 5477 / BU-1).